Here is a 265-residue protein sequence, read N- to C-terminus: Type 1 encapsulin shell protein (265 aa).

FMN contacts are provided by residues 79–81 (RAT), Trp-87, and 90–94 (DNLER). The pore-forming loop stretch occupies residues 184–189 (EAGHYP). Glu-235 lines the FMN pocket.

This sequence belongs to the encapsulin family. Family 1 subfamily. In terms of assembly, homomultimeric. This encapsulin nanocompartment is formed by 60 subunits; monomers form 12 pentamers which assemble to form shells. There are 12 pores where the pentamers meet as well as 3-fold axis channels and dimer channels; none are larger than 3-4 Angstroms in diameter. The N-terminus of the protein is inside the shell, the C-terminus is outside. Probably 3, 4 or 5 Flp cargo decamers bind inside the encapulin nanocompartment. It depends on FMN as a cofactor.

The protein localises to the encapsulin nanocompartment. Its activity is regulated as follows. Proteolysis activated by calcium and cobalt. Functionally, shell component of a type 1 encapsulin nanocompartment. Assembles into proteinaceous shells 23-24 nm in diameter with 2-2.5 nm thick walls. Cargo protein Flp (ferritin-like protein, probably stores iron) is targeted to the interior via its C-terminal extension; empty intact shells can be isolated in the absence of cargo protein. Fe(2+) may be able to pass though the 5-fold and dimer channels in the protein shell. In terms of biological role, protease that exhibits activity toward chymotrypsin and trypsin substrates. Probably does not have antibacterial activity. This is Type 1 encapsulin shell protein from Thermotoga maritima (strain ATCC 43589 / DSM 3109 / JCM 10099 / NBRC 100826 / MSB8).